The primary structure comprises 523 residues: Nuclear receptor ROR-alpha (523 aa).

Residues 1–26 show a composition bias toward low complexity; it reads MESAPAAPDPAASEPGSSGSEAAAGS. The interval 1-63 is disordered; it reads MESAPAAPDP…SRGISVTKKT (63 aa). Lys-38 is modified (N6-methyllysine). NR C4-type zinc fingers lie at residues 73–93 and 109–133; these read CKIC…CEGC and CPRQ…LQKC. Positions 73-138 form a DNA-binding region, nuclear receptor; that stretch reads CKICGDKSSG…RLQKCLAVGM (66 aa). Positions 154-183 are disordered; the sequence is DSLYAEVQKHRMQQQQRDHQQQPGEAEPLT. Thr-183 carries the phosphothreonine; by MAPK1 modification. Residue Lys-240 forms a Glycyl lysine isopeptide (Lys-Gly) (interchain with G-Cter in SUMO) linkage. In terms of domain architecture, NR LBD spans 272–510; that stretch reads ELEHLAQNIS…LHFPPLYKEL (239 aa). Positions 506-511 match the AF-2 motif; the sequence is LYKELF.

Belongs to the nuclear hormone receptor family. NR1 subfamily. In terms of assembly, monomer. Interacts (via the DNA-binding domain) with HIF1A; the interaction enhances HIF1A transcription under hypoxia through increasing protein stability. Interacts with CEBPB; the interaction disrupts the interaction CEBPB:EP300. Interacts with the coactivators NCOA2, PPARGC1A (via LXXLL motif), EP300 and MED1. Interacts with the corepressor NCOR1. Interacts with MAGED1 and CTNNB1. Interacts with CRY1 and PER2. Interacts (via AF-2 motif) with PROX1. Interacts with NRIP1. Isoform 4 interacts (via AF-2 motif) with isoform 1 of FOXP3 (via LXXLL motif). Phosphorylation by conventional PKCs in neurons inhibits transcriptional activity. Phosphorylated on Thr-183 by MAPK1/ERK1 in vitro. Post-translationally, sumoylated by SENP1 and SENP2. Sumoylation, promoted by PIAS2, PIAS3, PIAS4 but not PIAS1, enhances the transcriptional activity. Desumoylated by SENP1. In terms of processing, ubiquitinated, leading to its degradation by the proteasome. Proteasomal degradation is required for efficient transcriptional activity and is prevented by HR. Monomethylated at Lys-38 by EZH2, this creates a degron recognized by a DCX (DDB1-DCAF1/VPRBP-CUL4A-RBX1) E3 ubiquitin ligase complex. As to expression, expressed in cerebellum, heart, liver, lung, kidney, retina and brown and white adipose tissues. Expressed in the subset of mature Th17 cells.

It is found in the nucleus. In terms of biological role, nuclear receptor that binds DNA as a monomer to ROR response elements (RORE) containing a single core motif half-site 5'-AGGTCA-3' preceded by a short A-T-rich sequence. Key regulator of embryonic development, cellular differentiation, immunity, circadian rhythm as well as lipid, steroid, xenobiotics and glucose metabolism. Considered to have intrinsic transcriptional activity, have some natural ligands like oxysterols that act as agonists (25-hydroxycholesterol) or inverse agonists (7-oxygenated sterols), enhancing or repressing the transcriptional activity, respectively. Recruits distinct combinations of cofactors to target genes regulatory regions to modulate their transcriptional expression, depending on the tissue, time and promoter contexts. Regulates genes involved in photoreceptor development including OPN1SW, OPN1SM and ARR3 and skeletal muscle development with MYOD1. Required for proper cerebellum development, regulates SHH gene expression, among others, to induce granule cells proliferation as well as expression of genes involved in calcium-mediated signal transduction. Regulates the circadian expression of several clock genes, including CLOCK, BMAL1, NPAS2 and CRY1. Competes with NR1D1 for binding to their shared DNA response element on some clock genes such as BMAL1, CRY1 and NR1D1 itself, resulting in NR1D1-mediated repression or RORA-mediated activation of clock genes expression, leading to the circadian pattern of clock genes expression. Therefore influences the period length and stability of the clock. Regulates genes involved in lipid metabolism such as apolipoproteins APOA1, APOA5, APOC3 and PPARG. In liver, has specific and redundant functions with RORC as positive or negative modulator of expression of genes encoding phase I and phase II proteins involved in the metabolism of lipids, steroids and xenobiotics, such as CYP7B1 and SULT2A1. Induces a rhythmic expression of some of these genes. In addition, interplays functionally with NR1H2 and NR1H3 for the regulation of genes involved in cholesterol metabolism. Also involved in the regulation of hepatic glucose metabolism through the modulation of G6PC1 and PCK1. In adipose tissue, plays a role as negative regulator of adipocyte differentiation, probably acting through dual mechanisms. May suppress CEBPB-dependent adipogenesis through direct interaction and PPARG-dependent adipogenesis through competition for DNA-binding. Downstream of IL6 and TGFB and synergistically with RORC isoform 2, is implicated in the lineage specification of uncommitted CD4(+) T-helper (T(H)) cells into T(H)17 cells, antagonizing the T(H)1 program. Probably regulates IL17 and IL17F expression on T(H) by binding to the essential enhancer conserved non-coding sequence 2 (CNS2) in the IL17-IL17F locus. Involved in hypoxia signaling by interacting with and activating the transcriptional activity of HIF1A. May inhibit cell growth in response to cellular stress. May exert an anti-inflammatory role by inducing CHUK expression and inhibiting NF-kappa-B signaling. The polypeptide is Nuclear receptor ROR-alpha (Rora) (Mus musculus (Mouse)).